We begin with the raw amino-acid sequence, 644 residues long: 3D-(3,5/4)-trihydroxycyclohexane-1,2-dione hydrolase (644 aa).

E65 contributes to the thiamine diphosphate binding site. The interval 442-522 (SLPGDLHKVW…INILLFDNAG (81 aa)) is thiamine pyrophosphate binding. Mg(2+)-binding residues include D493 and N520.

It belongs to the TPP enzyme family. The cofactor is Mg(2+). Requires thiamine diphosphate as cofactor.

It catalyses the reaction 3D-3,5/4-trihydroxycyclohexane-1,2-dione + H2O = 5-deoxy-D-glucuronate + H(+). Its pathway is polyol metabolism; myo-inositol degradation into acetyl-CoA; acetyl-CoA from myo-inositol: step 3/7. Involved in the cleavage of the C1-C2 bond of 3D-(3,5/4)-trihydroxycyclohexane-1,2-dione (THcHDO) to yield 5-deoxy-glucuronate (5DG). This is 3D-(3,5/4)-trihydroxycyclohexane-1,2-dione hydrolase from Clostridium tetani (strain Massachusetts / E88).